The following is a 349-amino-acid chain: Beta-glucanase (349 aa).

A signal peptide spans 1–27 (MNIKKTAVKSALAVAAAAAALTTNVSA). A GH16 domain is found at 28-197 (KDFSGAELYT…WVKVYKYTPG (170 aa)). Glu79 (nucleophile) is an active-site residue. Glu83 functions as the Proton donor in the catalytic mechanism. Residues 258–311 (SFNGQVPRDDEPAPQSSSSAPASSSSVPASSSSVPASSSSAFVPPSSSSATNAI) are disordered. The span at 270–307 (APQSSSSAPASSSSVPASSSSVPASSSSAFVPPSSSSA) shows a compositional bias: low complexity. A run of 5 repeats spans residues 271–277 (PQSSSSA), 278–284 (PASSSSV), 285–291 (PASSSSV), 292–298 (PASSSSA), and 301–307 (PPSSSSA). Positions 271 to 307 (PQSSSSAPASSSSVPASSSSVPASSSSAFVPPSSSSA) are 5 X 7 AA tandem repeats of P-X-S-S-S-S-X.

The protein belongs to the glycosyl hydrolase 16 family.

The enzyme catalyses Hydrolysis of (1-&gt;4)-beta-D-glucosidic linkages in beta-D-glucans containing (1-&gt;3)- and (1-&gt;4)-bonds.. This is Beta-glucanase from Fibrobacter succinogenes (strain ATCC 19169 / S85).